A 311-amino-acid chain; its full sequence is Homeobox protein CDX-2 (311 aa).

Serine 60 carries the phosphoserine modification. Residues 111–151 form a disordered region; that stretch reads EYHAHHHPHHHPHHPAASPSCASGLLQTLNLGPPGPAATAA. The segment covering 114–124 has biased composition (basic residues); the sequence is AHHHPHHHPHH. An interaction with DNA region spans residues 185-215; it reads KDKYRVVYTDHQRLELEKEFHFSRYITIRRK. Residues 185–244 constitute a DNA-binding region (homeobox); sequence KDKYRVVYTDHQRLELEKEFHFSRYITIRRKSELAATLGLSERQVKIWFQNRRAKERKIK. The tract at residues 227–241 is interaction with 5-mCpG DNA; that stretch reads RQVKIWFQNRRAKER. The tract at residues 239 to 311 is disordered; that stretch reads KERKIKKKQQ…GGVLNSTVTQ (73 aa). Over residues 248 to 257 the composition is skewed to low complexity; that stretch reads QQQQQQQQQQ. The span at 258–268 shows a compositional bias: pro residues; sequence PPQPPPQPSQP. Serine 281 carries the post-translational modification Phosphoserine; by CDK2. The 4S motif; modulates transactivation activity and protein stability signature appears at 281–293; sequence SPVTSLQGSVPGS. A compositionally biased stretch (low complexity) spans 285-298; it reads SLQGSVPGSVPGVL.

This sequence belongs to the Caudal homeobox family. As to quaternary structure, can bind DNA as a monomer or homodimer. Ubiquitinated, leading to its degradation by the proteasome. In terms of processing, phosphorylation at Ser-60 reduces transactivation capacity. Phosphorylation at Ser-281 reduces transactivation capacity and increases ubiquitin-dependent proteasome degradation. As to expression, in the intestine, detected in ileum and proximal and distal colon (at protein level). In adult small intestine, predominantly localized in crypt and lower villus cells of the epithelium (at protein level). Expressed in the intestine but not detected in other tissues including stomach, liver, kidney, spleen, brain, heart, lung, pancreas, skeletal muscle and testis. Expressed specifically in gut epithelium where it is not restricted to a particular cell lineage. Abundant expression is seen in the proximal colon with slightly lower levels in distal colon. Expression in the proximal colon is not restricted either to a particular cell lineage or stage of differentiation while in the distal colon it is more abundant in the differentiated cells towards the top of the crypt.

The protein localises to the nucleus. Functionally, transcription factor which regulates the transcription of multiple genes expressed in the intestinal epithelium. Binds to the promoter of the intestinal sucrase-isomaltase SI and activates SI transcription. Binds to the DNA sequence 5'-ATAAAAACTTAT-3' in the promoter region of VDR and activates VDR transcription. Binds to and activates transcription of LPH. Activates transcription of CLDN2 and intestinal mucin MUC2. Binds to the 5'-AATTTTTTACAACACCT-3' DNA sequence in the promoter region of CA1 and activates CA1 transcription. Important in broad range of functions from early differentiation to maintenance of the intestinal epithelial lining of both the small and large intestine. Binds preferentially to methylated DNA. In Mus musculus (Mouse), this protein is Homeobox protein CDX-2 (Cdx2).